The following is a 748-amino-acid chain: Cytosolic phospholipase A2 (748 aa).

The interval 1–178 (MSFIDPYQHI…MRKLLGPKKS (178 aa)) is phospholipid binding. S2 carries the post-translational modification Phosphoserine. Residues 6-122 (PYQHIIVEHQ…KVGEKKEVPF (117 aa)) form the C2 domain. Ca(2+)-binding residues include D40, T41, D43, N65, D93, A94, and N95. The PLA2c domain occupies 138 to 739 (VCSSPDLRFS…SNVEARRFFN (602 aa)). S228 functions as the Nucleophile in the catalytic mechanism. Position 268 is a phosphothreonine (T268). The interval 428–458 (HIVSNDSSDSDDESQEPKGTEGEDAEREYQN) is disordered. Phosphoserine occurs at positions 434, 435, and 437. The span at 442–458 (QEPKGTEGEDAEREYQN) shows a compositional bias: basic and acidic residues. S505 carries the phosphoserine; by MAPK modification. S514 carries the post-translational modification Phosphoserine. K540 participates in a covalent cross-link: Glycyl lysine isopeptide (Lys-Gly) (interchain with G-Cter in SUMO2). Residue D548 is the Proton acceptor of the active site. A Glycyl lysine isopeptide (Lys-Gly) (interchain with G-Cter in SUMO2) cross-link involves residue K605. 2 positions are modified to phosphoserine: S726 and S728.

As to quaternary structure, interacts with KAT5. Phosphorylated at both Ser-505 and Ser-726 in response to mitogenic stimuli.

The protein resides in the cytoplasm. Its subcellular location is the golgi apparatus membrane. It is found in the nucleus envelope. The enzyme catalyses a 1,2-diacyl-sn-glycero-3-phosphocholine + H2O = a 1-acyl-sn-glycero-3-phosphocholine + a fatty acid + H(+). It catalyses the reaction a 1-O-alkyl-2-acyl-sn-glycero-3-phosphocholine + H2O = a 1-O-alkyl-sn-glycero-3-phosphocholine + a fatty acid + H(+). It carries out the reaction a 1-acyl-sn-glycero-3-phosphocholine + H2O = sn-glycerol 3-phosphocholine + a fatty acid + H(+). The catalysed reaction is 1-hexadecanoyl-2-(5Z,8Z,11Z,14Z-eicosatetraenoyl)-sn-glycero-3-phosphocholine + H2O = 1-hexadecanoyl-sn-glycero-3-phosphocholine + (5Z,8Z,11Z,14Z)-eicosatetraenoate + H(+). The enzyme catalyses 1,2-di-(5Z,8Z,11Z,14Z-eicosatetraenoyl)-sn-glycero-3-phosphocholine + H2O = 1-(5Z,8Z,11Z,14Z-eicosatetraenoyl)-sn-glycero-3-phosphocholine + (5Z,8Z,11Z,14Z)-eicosatetraenoate + H(+). It catalyses the reaction 1-octadecanoyl-2-(5Z,8Z,11Z,14Z-eicosatetraenoyl)-sn-glycero-3-phosphocholine + H2O = 1-octadecanoyl-sn-glycero-3-phosphocholine + (5Z,8Z,11Z,14Z)-eicosatetraenoate + H(+). It carries out the reaction 1-hexadecanoyl-2-(9Z,12Z-octadecadienoyl)-sn-glycero-3-phosphocholine + H2O = (9Z,12Z)-octadecadienoate + 1-hexadecanoyl-sn-glycero-3-phosphocholine + H(+). The catalysed reaction is 1-octadecanoyl-2-(9Z,12Z,15Z-octadecatrienoyl)-sn-glycero-3-phosphocholine + H2O = (9Z,12Z,15Z)-octadecatrienoate + 1-octadecanoyl-sn-glycero-3-phosphocholine + H(+). The enzyme catalyses 1-(5Z,8Z,11Z,14Z-eicosatetraenoyl)-2-hexadecanoyl-sn-glycero-3-phosphocholine + H2O = 1-(5Z,8Z,11Z,14Z-eicosatetraenoyl)-sn-glycero-3-phosphocholine + hexadecanoate + H(+). It catalyses the reaction 1-O-hexadecyl-2-(5Z,8Z,11Z,14Z)-eicosatetraenoyl-sn-glycero-3-phosphocholine + H2O = 1-O-hexadecyl-sn-glycero-3-phosphocholine + (5Z,8Z,11Z,14Z)-eicosatetraenoate + H(+). It carries out the reaction 1,2-di-(9Z-octadecenoyl)-sn-glycero-3-phospho-(1'-sn-glycerol) + H2O = 1-(9Z-octadecenoyl)-sn-glycero-3-phospho-(1'-sn-glycerol) + (9Z)-octadecenoate + H(+). The catalysed reaction is 1-octadecanoyl-2-(5Z,8Z,11Z,14Z-eicosatetraenoyl)-sn-glycero-3-phosphate + H2O = 1-octadecanoyl-sn-glycero-3-phosphate + (5Z,8Z,11Z,14Z)-eicosatetraenoate + H(+). The enzyme catalyses 1-hexadecanoyl-sn-glycero-3-phosphocholine + H2O = sn-glycerol 3-phosphocholine + hexadecanoate + H(+). It catalyses the reaction 2-(prostaglandin E2)-sn-glycero-3-phosphoethanolamine + H2O = sn-glycero-3-phosphoethanolamine + prostaglandin E2 + H(+). It carries out the reaction 2-[(15S)-hydroxy-(5Z,8Z,11Z,13E)-eicosatetraenoyl]-sn-glycero-3-phosphocholine + H2O = (15S)-hydroxy-(5Z,8Z,11Z,13E)-eicosatetraenoate + sn-glycerol 3-phosphocholine + H(+). The catalysed reaction is 2-[(15R)-hydroxy-(5Z,8Z,11Z,13E)-eicosatetraenoyl]-sn-glycero-3-phosphocholine + H2O = (15R)-hydroxy-(5Z,8Z,11Z,13E)-eicosatetraenoate + sn-glycerol 3-phosphocholine + H(+). The enzyme catalyses 2-(prostaglandin E2)-sn-glycero-3-phosphocholine + H2O = prostaglandin E2 + sn-glycerol 3-phosphocholine + H(+). It catalyses the reaction 2-[(11R)-hydroxy-(5Z,8Z,12E,14Z)-eicosatetraenoyl]-sn-glycero-3-phosphocholine + H2O = (11R)-hydroxy-(5Z,8Z,12E,14Z)-eicosatetraenoate + sn-glycerol 3-phosphocholine + H(+). It carries out the reaction 1-(5Z,8Z,11Z,14Z-eicosatetraenoyl)-2-O-hexadecyl-sn-glycero-3-phosphocholine + H2O = 2-O-hexadecyl-sn-glycero-3-phosphocholine + (5Z,8Z,11Z,14Z)-eicosatetraenoate + H(+). The catalysed reaction is 1-octadecanoyl-2-(5Z,8Z,11Z,14Z-eicosatetraenoyl)-sn-glycero-3-phosphocholine + glycerol = 1-(5Z,8Z,11Z,14Z-eicosatetraenoyl)-glycerol + 1-octadecanoyl-sn-glycero-3-phosphocholine. The enzyme catalyses 1-octadecanoyl-2-(9Z,12Z,15Z-octadecatrienoyl)-sn-glycero-3-phosphocholine + glycerol = 1-(9Z,12Z,15Z-octadecatrienoyl)-glycerol + 1-octadecanoyl-sn-glycero-3-phosphocholine. The protein operates within membrane lipid metabolism; glycerophospholipid metabolism. It participates in lipid metabolism; arachidonate metabolism. It functions in the pathway lipid metabolism; prostaglandin biosynthesis. Its pathway is lipid metabolism; leukotriene B4 biosynthesis. Activated by cytosolic calcium, which is necessary for binding to membrane lipids. Activated by phosphorylation in response to mitogenic stimuli. Has primarily calcium-dependent phospholipase and lysophospholipase activities, with a major role in membrane lipid remodeling and biosynthesis of lipid mediators of the inflammatory response. Plays an important role in embryo implantation and parturition through its ability to trigger prostanoid production. Preferentially hydrolyzes the ester bond of the fatty acyl group attached at sn-2 position of phospholipids (phospholipase A2 activity). Selectively hydrolyzes sn-2 arachidonoyl group from membrane phospholipids, providing the precursor for eicosanoid biosynthesis via the cyclooxygenase pathway. In an alternative pathway of eicosanoid biosynthesis, hydrolyzes sn-2 fatty acyl chain of eicosanoid lysophopholipids to release free bioactive eicosanoids. Hydrolyzes the ester bond of the fatty acyl group attached at sn-1 position of phospholipids (phospholipase A1 activity) only if an ether linkage rather than an ester linkage is present at the sn-2 position. This hydrolysis is not stereospecific. Has calcium-independent phospholipase A2 and lysophospholipase activities in the presence of phosphoinositides. Has O-acyltransferase activity. Catalyzes the transfer of fatty acyl chains from phospholipids to a primary hydroxyl group of glycerol (sn-1 or sn-3), potentially contributing to monoacylglycerol synthesis. This Oryctolagus cuniculus (Rabbit) protein is Cytosolic phospholipase A2 (PLA2G4A).